We begin with the raw amino-acid sequence, 777 residues long: CRISPR system single-strand-specific deoxyribonuclease Cas10/Csm1 (subtype III-A) (777 aa).

Residues 1–106 (MEIDELTALG…VYEADNLASG (106 aa)) enclose the HD domain. Residues 513-660 (RRLGVMKGDV…GRNRVFVVGR (148 aa)) form the GGDEF domain.

It belongs to the CRISPR-associated Cas10/Csm1 family. In terms of assembly, probably part of the Csm effector complex, that includes Cas10, Csm2, Csm3, Csm4, Csm5 and mature crRNA. Will form a homodimer in solution, interacts with Csm4, which is a tighter, better association than the homodimeric Cas10 and uses the same interface for interaction. The cofactor is a divalent metal cation.

Its activity is regulated as follows. ssDNase activity is inhibited by EDTA. CRISPR (clustered regularly interspaced short palindromic repeat) is an adaptive immune system that provides protection against mobile genetic elements (viruses, transposable elements and conjugative plasmids). CRISPR clusters contain spacers, sequences complementary to antecedent mobile elements, and target invading nucleic acids. CRISPR clusters are transcribed and processed into CRISPR RNA (crRNA). The type III-A Csm effector complex binds crRNA and acts as a crRNA-guided RNase, DNase and cyclic oligoadenylate synthase; binding of target RNA cognate to the crRNA is required for all activities. Functionally, a single-strand deoxyribonuclease (ssDNase) which digests linear and circular ssDNA; has 5'-3' and 3'-5' exonuclease activity as well as a less efficient endonuclease activity. Has a minimal size requirement; 100 nucleotide ssDNA (nt) is more efficiently digested than 50 or 25 nt ssDNA, while 14 nt ssDNA is not cleaved at all. It has no activity on dsDNA or ssRNA. Its function is as follows. ssDNase activity is stimulated in the ternary Csm effector complex; binding of cognate target RNA activates the ssDNase, as the target RNA is degraded ssDNA activity decreases. In terms of biological role, when associated with the ternary Csm effector complex (the crRNA, Cas proteins and a cognate target ssRNA) synthesizes cyclic oligoadenylates (cOA) from ATP. cOAs are second messengers that stimulate the ssRNase activity of Csm6, inducing an antiviral state important for defense against invading nucleic acids. The chain is CRISPR system single-strand-specific deoxyribonuclease Cas10/Csm1 (subtype III-A) from Thermococcus onnurineus (strain NA1).